The primary structure comprises 196 residues: Pyridoxal 5'-phosphate synthase subunit PdxT (196 aa).

Residue 56-58 (GES) participates in L-glutamine binding. C85 acts as the Nucleophile in catalysis. L-glutamine contacts are provided by residues R113 and 141-142 (IR). Residues H177 and E179 each act as charge relay system in the active site.

It belongs to the glutaminase PdxT/SNO family. In terms of assembly, in the presence of PdxS, forms a dodecamer of heterodimers. Only shows activity in the heterodimer.

It catalyses the reaction aldehydo-D-ribose 5-phosphate + D-glyceraldehyde 3-phosphate + L-glutamine = pyridoxal 5'-phosphate + L-glutamate + phosphate + 3 H2O + H(+). The enzyme catalyses L-glutamine + H2O = L-glutamate + NH4(+). It participates in cofactor biosynthesis; pyridoxal 5'-phosphate biosynthesis. Catalyzes the hydrolysis of glutamine to glutamate and ammonia as part of the biosynthesis of pyridoxal 5'-phosphate. The resulting ammonia molecule is channeled to the active site of PdxS. In Methanospirillum hungatei JF-1 (strain ATCC 27890 / DSM 864 / NBRC 100397 / JF-1), this protein is Pyridoxal 5'-phosphate synthase subunit PdxT.